The sequence spans 478 residues: GDP-fucose protein O-fucosyltransferase 3 (478 aa).

At Met-1–Arg-8 the chain is on the cytoplasmic side. The helical; Signal-anchor for type II membrane protein transmembrane segment at Leu-9–Glu-31 threads the bilayer. The Lumenal segment spans residues Leu-32–Asp-478. N-linked (GlcNAc...) asparagine glycosylation is found at Asn-110 and Asn-168. Cys-389 and Cys-392 are oxidised to a cystine.

This sequence belongs to the glycosyltransferase 10 family.

Its subcellular location is the endoplasmic reticulum membrane. It catalyses the reaction L-threonyl-[protein] + GDP-beta-L-fucose = 3-O-(alpha-L-fucosyl)-L-threonyl-[protein] + GDP + H(+). The enzyme catalyses L-seryl-[protein] + GDP-beta-L-fucose = 3-O-(alpha-L-fucosyl)-L-seryl-[protein] + GDP + H(+). It functions in the pathway protein modification; protein glycosylation. Functionally, protein O-fucosyltransferase that specifically catalyzes O-fucosylation of serine or threonine residues in EMI domains of target proteins, such as MMRN1, MMRN2 and EMID1. Attaches fucose through an O-glycosidic linkage. O-fucosylation of EMI domain-containing proteins may be required for facilitating protein folding and secretion. May also show alpha-(1,3)-fucosyltransferase activity toward the innermost N-acetyl glucosamine (GlcNAc) residue in biantennary N-glycan acceptors. However, this was tested with a library of synthetic substrates and this activity is unsure in vivo. May be involved in biosynthesis of Lewis X-carrying biantennary N-glycans that regulate neuron stem cell self-renewal during brain development. The chain is GDP-fucose protein O-fucosyltransferase 3 (FUT10) from Canis lupus familiaris (Dog).